Consider the following 269-residue polypeptide: Glutamate racemase (269 aa).

Substrate contacts are provided by residues 7 to 8 and 39 to 40; these read DS and YG. C70 acts as the Proton donor/acceptor in catalysis. Residue 71-72 coordinates substrate; sequence NT. The Proton donor/acceptor role is filled by C194. 195 to 196 is a substrate binding site; that stretch reads TH.

It belongs to the aspartate/glutamate racemases family.

It catalyses the reaction L-glutamate = D-glutamate. It functions in the pathway cell wall biogenesis; peptidoglycan biosynthesis. Provides the (R)-glutamate required for cell wall biosynthesis. This Roseobacter denitrificans (strain ATCC 33942 / OCh 114) (Erythrobacter sp. (strain OCh 114)) protein is Glutamate racemase.